Reading from the N-terminus, the 441-residue chain is Xaa-Pro aminopeptidase (441 aa).

The Mn(2+) site is built by aspartate 261, aspartate 272, histidine 355, glutamate 384, and glutamate 407.

This sequence belongs to the peptidase M24B family. As to quaternary structure, homotetramer. The cofactor is Mn(2+).

The protein localises to the cytoplasm. It carries out the reaction Release of any N-terminal amino acid, including proline, that is linked to proline, even from a dipeptide or tripeptide.. This is Xaa-Pro aminopeptidase (pepP) from Escherichia coli (strain K12).